An 895-amino-acid polypeptide reads, in one-letter code: Eukaryotic translation initiation factor 3 subunit C (895 aa).

Residues 1-108 form a disordered region; sequence MSGFFRKVGD…DSDSEEEVKK (108 aa). 2 stretches are compositionally biased toward acidic residues: residues 11 to 31 and 52 to 75; these read SDSE…ESGD and DDSD…DDDN. Positions 638–812 constitute a PCI domain; it reads FHMHINLELL…NVVSFHRLEL (175 aa). Residues 838–860 show a composition bias toward basic and acidic residues; that stretch reads DAKLGEGKEQRSGAGGERGDREG. The segment at 838 to 895 is disordered; it reads DAKLGEGKEQRSGAGGERGDREGGQPGGRRERRGGSAARGRGRGRGRAQQFQALGQKV. Low complexity predominate over residues 884–895; that stretch reads RAQQFQALGQKV.

This sequence belongs to the eIF-3 subunit C family. As to quaternary structure, component of the eukaryotic translation initiation factor 3 (eIF-3) complex.

It localises to the cytoplasm. Component of the eukaryotic translation initiation factor 3 (eIF-3) complex, which is involved in protein synthesis of a specialized repertoire of mRNAs and, together with other initiation factors, stimulates binding of mRNA and methionyl-tRNAi to the 40S ribosome. The eIF-3 complex specifically targets and initiates translation of a subset of mRNAs involved in cell proliferation. This Mycosarcoma maydis (Corn smut fungus) protein is Eukaryotic translation initiation factor 3 subunit C.